The sequence spans 89 residues: Ribonuclease P protein component 1 (89 aa).

Belongs to the eukaryotic/archaeal RNase P protein component 1 family. In terms of assembly, consists of a catalytic RNA component and at least 4-5 protein subunits.

Its subcellular location is the cytoplasm. The enzyme catalyses Endonucleolytic cleavage of RNA, removing 5'-extranucleotides from tRNA precursor.. In terms of biological role, part of ribonuclease P, a protein complex that generates mature tRNA molecules by cleaving their 5'-ends. The chain is Ribonuclease P protein component 1 from Thermoplasma volcanium (strain ATCC 51530 / DSM 4299 / JCM 9571 / NBRC 15438 / GSS1).